A 260-amino-acid chain; its full sequence is uncharacterized protein (260 aa).

This is an uncharacterized protein from Saccharomyces cerevisiae (strain ATCC 204508 / S288c) (Baker's yeast).